Reading from the N-terminus, the 281-residue chain is Ribosomal RNA small subunit methyltransferase A (281 aa).

Residues N36, L38, G63, E84, D109, and N127 each contribute to the S-adenosyl-L-methionine site.

This sequence belongs to the class I-like SAM-binding methyltransferase superfamily. rRNA adenine N(6)-methyltransferase family. RsmA subfamily.

The protein localises to the cytoplasm. It catalyses the reaction adenosine(1518)/adenosine(1519) in 16S rRNA + 4 S-adenosyl-L-methionine = N(6)-dimethyladenosine(1518)/N(6)-dimethyladenosine(1519) in 16S rRNA + 4 S-adenosyl-L-homocysteine + 4 H(+). Specifically dimethylates two adjacent adenosines (A1518 and A1519) in the loop of a conserved hairpin near the 3'-end of 16S rRNA in the 30S particle. May play a critical role in biogenesis of 30S subunits. The sequence is that of Ribosomal RNA small subunit methyltransferase A from Borreliella afzelii (strain PKo) (Borrelia afzelii).